We begin with the raw amino-acid sequence, 84 residues long: Large ribosomal subunit protein bL27 (84 aa).

Positions M1 to Y20 are disordered.

It belongs to the bacterial ribosomal protein bL27 family.

This is Large ribosomal subunit protein bL27 from Dictyoglomus thermophilum (strain ATCC 35947 / DSM 3960 / H-6-12).